The primary structure comprises 421 residues: Serine--tRNA ligase (421 aa).

T229–E231 is an L-serine binding site. Residue R260–E262 participates in ATP binding. Residue E283 coordinates L-serine. An ATP-binding site is contributed by E347 to S350. Position 382 (S382) interacts with L-serine.

Belongs to the class-II aminoacyl-tRNA synthetase family. Type-1 seryl-tRNA synthetase subfamily. Homodimer. The tRNA molecule binds across the dimer.

It is found in the cytoplasm. The catalysed reaction is tRNA(Ser) + L-serine + ATP = L-seryl-tRNA(Ser) + AMP + diphosphate + H(+). It carries out the reaction tRNA(Sec) + L-serine + ATP = L-seryl-tRNA(Sec) + AMP + diphosphate + H(+). The protein operates within aminoacyl-tRNA biosynthesis; selenocysteinyl-tRNA(Sec) biosynthesis; L-seryl-tRNA(Sec) from L-serine and tRNA(Sec): step 1/1. Its function is as follows. Catalyzes the attachment of serine to tRNA(Ser). Is also able to aminoacylate tRNA(Sec) with serine, to form the misacylated tRNA L-seryl-tRNA(Sec), which will be further converted into selenocysteinyl-tRNA(Sec). This is Serine--tRNA ligase from Symbiobacterium thermophilum (strain DSM 24528 / JCM 14929 / IAM 14863 / T).